The following is a 595-amino-acid chain: Putative lipase atg15 (595 aa).

Topologically, residues M1–D20 are cytoplasmic. The helical; Signal-anchor for type II membrane protein transmembrane segment at L21–G41 threads the bilayer. Residues S42–F595 lie on the Lumenal side of the membrane. Residues N164, N199, N221, N279, and N303 are each glycosylated (N-linked (GlcNAc...) asparagine). S319 serves as the catalytic Charge relay system. An N-linked (GlcNAc...) asparagine glycan is attached at N465.

This sequence belongs to the AB hydrolase superfamily. Lipase family. Binds to both phosphatidylinositol (PI) and phosphatidylinositol 3,5-bisphosphate (PIP2).

It localises to the endosome. Its subcellular location is the multivesicular body membrane. It is found in the prevacuolar compartment membrane. It catalyses the reaction a triacylglycerol + H2O = a diacylglycerol + a fatty acid + H(+). Functionally, lipase which is essential for lysis of subvacuolar cytoplasm to vacuole targeted bodies and intravacuolar autophagic bodies. Involved in the lysis of intravacuolar multivesicular body (MVB) vesicles. The intravacuolar membrane disintegration by atg15 is critical to life span extension. This chain is Putative lipase atg15 (atg15), found in Aspergillus niger (strain ATCC MYA-4892 / CBS 513.88 / FGSC A1513).